We begin with the raw amino-acid sequence, 109 residues long: Cell division suppressor protein YneA (109 aa).

Residues 39 to 90 (SEVNVNEGDSLWALADQYAGKSDMAKADFVSWVEKENNLSDGHVEAGDSVVI) enclose the LysM domain.

It belongs to the YneA family.

Its subcellular location is the cytoplasm. Its function is as follows. Inhibits cell division during the SOS response. Affects a later stage of the cell division protein assembly, after the assembly of the Z ring, by probably suppressing recruitment of FtsL and/or DivIC to the division machinery. This chain is Cell division suppressor protein YneA, found in Listeria monocytogenes serovar 1/2a (strain ATCC BAA-679 / EGD-e).